Here is a 562-residue protein sequence, read N- to C-terminus: Phosphatidylinositol 4-phosphate 5-kinase type-1 alpha (562 aa).

Residues 81-449 (TSSALKGAIQ…RFQRFMCNTV (369 aa)) form the PIPK domain. K103 is covalently cross-linked (Glycyl lysine isopeptide (Lys-Gly) (interchain with G-Cter in ubiquitin)). Residue S486 is modified to Phosphoserine. A disordered region spans residues 506–526 (HLGRPDVLPQTPPLEEISEGS).

In terms of assembly, interacts with RAC1. Interacts with TUT1. Forms a complex with CDH1/E-cadherin, CTNNB1/beta-catenin and CTNND1 at the plasma membrane upon calcium stimulation. Found in a ternary complex with IRS1 and DGKZ in the absence of insulin stimulation. Interacts with DGKZ. Interacts with PIP4K2C; the interaction inhibits PIP5K1A kinase activity. In terms of tissue distribution, highly expressed in heart, placenta, skeletal muscle, kidney and pancreas. Detected at lower levels in brain, lung and liver.

Its subcellular location is the cell membrane. It is found in the cytoplasm. The protein localises to the nucleus. The protein resides in the nucleus speckle. It localises to the cell projection. Its subcellular location is the ruffle. It is found in the lamellipodium. The catalysed reaction is a 1,2-diacyl-sn-glycero-3-phospho-(1D-myo-inositol 4-phosphate) + ATP = a 1,2-diacyl-sn-glycero-3-phospho-(1D-myo-inositol-4,5-bisphosphate) + ADP + H(+). It catalyses the reaction 1-octadecanoyl-2-(5Z,8Z,11Z,14Z)-eicosatetraenoyl-sn-glycero-3-phospho-1D-myo-inositol 4-phosphate + ATP = 1-octadecanoyl-2-(5Z,8Z,11Z,14Z)-eicosatetraenoyl-sn-glycero-3-phospho-1D-myo-inositol 4,5-bisphosphate + ADP + H(+). It carries out the reaction 1,2-dihexadecanoyl-sn-glycero-3-phospho-(1D-myo-inositol-4-phosphate) + ATP = 1,2-dihexadecanoyl-sn-glycero-3-phospho-(1D-myo-inositol-4,5-bisphosphate) + ADP + H(+). The enzyme catalyses 1-octadecanoyl-2-(9Z)-octadecenoyl-sn-glycero-3-phospho-1D-myo-inositol 4-phosphate + ATP = 1-octadecanoyl-2-(9Z)-octadecenoyl-sn-glycero-3-phospho-1D-myo-inositol 4,5-bisphosphate + ADP + H(+). The catalysed reaction is 1-octadecanoyl-2-(9Z)-octadecenoyl-sn-glycero-3-phospho-1D-myo-inositol + ATP = 1-octadecanoyl-2-(9Z)-octadecenoyl-sn-glycero-3-phospho-1D-myo-inositol 5-phosphate + ADP + H(+). It catalyses the reaction 1-octadecanoyl-2-(9Z,12Z)-octadecadienoyl-sn-glycero-3-phospho-1D-myo-inositol + ATP = 1-octadecanoyl-2-(9Z,12Z)-octadecadienoyl-sn-glycero-3-phospho-1D-myo-inositol 5-phosphate + ADP + H(+). It carries out the reaction 1-octadecanoyl-2-(5Z,8Z,11Z,14Z-eicosatetraenoyl)-sn-glycero-3-phospho-(1D-myo-inositol) + ATP = 1-octadecanoyl-2-(5Z,8Z,11Z,14Z)-eicosatetraenoyl-sn-glycero-3-phospho-1D-myo-inositol 5-phosphate + ADP + H(+). The enzyme catalyses 1,2-di-(9Z,12Z)-octadecadienoyl-sn-glycero-3-phospho-1D-myo-inositol + ATP = 1,2-di(9Z,12Z)-octadecadienoyl-sn-glycero-3-phospho-1D-myo-inositol 5-phosphate + ADP + H(+). Its activity is regulated as follows. Activated by diarachidonoyl phosphatidic acid (DAPA), when 1,2-dipalmitoyl-PI4P is used as a substrate. Catalyzes the phosphorylation of phosphatidylinositol 4-phosphate (PtdIns(4)P/PI4P) to form phosphatidylinositol 4,5-bisphosphate (PtdIns(4,5)P2/PIP2), a lipid second messenger that regulates several cellular processes such as signal transduction, vesicle trafficking, actin cytoskeleton dynamics, cell adhesion, and cell motility. PtdIns(4,5)P2 can directly act as a second messenger or can be utilized as a precursor to generate other second messengers: inositol 1,4,5-trisphosphate (IP3), diacylglycerol (DAG) or phosphatidylinositol-3,4,5-trisphosphate (PtdIns(3,4,5)P3/PIP3). PIP5K1A-mediated phosphorylation of PtdIns(4)P is the predominant pathway for PtdIns(4,5)P2 synthesis. Can also use phosphatidylinositol (PtdIns) as substrate in vitro. Together with PIP5K1C, is required for phagocytosis, both enzymes regulating different types of actin remodeling at sequential steps. Promotes particle ingestion by activating the WAS GTPase-binding protein that induces Arp2/3 dependent actin polymerization at the nascent phagocytic cup. Together with PIP5K1B, is required, after stimulation by G-protein coupled receptors, for the synthesis of IP3 that will induce stable platelet adhesion. Recruited to the plasma membrane by the E-cadherin/beta-catenin complex where it provides the substrate PtdIns(4,5)P2 for the production of PtdIns(3,4,5)P3, IP3 and DAG, that will mobilize internal calcium and drive keratinocyte differentiation. Positively regulates insulin-induced translocation of SLC2A4 to the cell membrane in adipocytes. Together with PIP5K1C has a role during embryogenesis. Independently of its catalytic activity, is required for membrane ruffling formation, actin organization and focal adhesion formation during directional cell migration by controlling integrin-induced translocation of the small GTPase RAC1 to the plasma membrane. Also functions in the nucleus where it acts as an activator of TUT1 adenylyltransferase activity in nuclear speckles, thereby regulating mRNA polyadenylation of a select set of mRNAs. The protein is Phosphatidylinositol 4-phosphate 5-kinase type-1 alpha of Homo sapiens (Human).